A 233-amino-acid chain; its full sequence is Large ribosomal subunit protein uL1 (233 aa).

It belongs to the universal ribosomal protein uL1 family. In terms of assembly, part of the 50S ribosomal subunit.

In terms of biological role, binds directly to 23S rRNA. The L1 stalk is quite mobile in the ribosome, and is involved in E site tRNA release. Functionally, protein L1 is also a translational repressor protein, it controls the translation of the L11 operon by binding to its mRNA. The polypeptide is Large ribosomal subunit protein uL1 (Photorhabdus laumondii subsp. laumondii (strain DSM 15139 / CIP 105565 / TT01) (Photorhabdus luminescens subsp. laumondii)).